Reading from the N-terminus, the 36-residue chain is Peruvianin-1 (36 aa).

It belongs to the germin family. Homohexamer, possibly consisting of a trimer of dimers. Glycosylated.

With respect to regulation, inhibited by iodoacetamide and trans-epoxysuccinyl-L-leucylamido(4-guanidino)butane (E-64) but not by phenylmethylsulfonyl fluoride (PMSF), pepstatin-A, ethylenediamine tetra acetic acid (EDTA) or ethylene glycol tetraacetic acid (EGTA). Cysteine protease able to degrade azocasein and benzoyl-arginine-beta-naphtylamide (BANA) in vitro. The protein is Peruvianin-1 of Thevetia peruviana (Yellow oleander).